We begin with the raw amino-acid sequence, 83 residues long: Exodeoxyribonuclease 7 small subunit (83 aa).

Belongs to the XseB family. As to quaternary structure, heterooligomer composed of large and small subunits.

The protein localises to the cytoplasm. It carries out the reaction Exonucleolytic cleavage in either 5'- to 3'- or 3'- to 5'-direction to yield nucleoside 5'-phosphates.. Bidirectionally degrades single-stranded DNA into large acid-insoluble oligonucleotides, which are then degraded further into small acid-soluble oligonucleotides. This chain is Exodeoxyribonuclease 7 small subunit, found in Rhizobium leguminosarum bv. trifolii (strain WSM2304).